Consider the following 646-residue polypeptide: Peptidylprolyl isomerase domain and WD repeat-containing protein 1 (646 aa).

Positions 1–50 (MATESGSDSQLRRRRRRDPEGSEKTELSEREPALAVAGSEENDDENEERW) are disordered. Alanine 2 is modified (N-acetylalanine). Residues 17-32 (RDPEGSEKTELSEREP) are compositionally biased toward basic and acidic residues. WD repeat units lie at residues 88-126 (MHRD…IEFV), 131-170 (SHLG…MINM), 221-260 (LHVS…YKFP), and 278-319 (KCKA…RVFD). One can recognise a PPIase cyclophilin-type domain in the interval 490–645 (VSDSAIVHTS…EDVSIINITV (156 aa)).

This sequence belongs to the cyclophilin-type PPIase family. PPIL1 subfamily. As to quaternary structure, identified in the spliceosome C complex.

The protein resides in the nucleus. It carries out the reaction [protein]-peptidylproline (omega=180) = [protein]-peptidylproline (omega=0). Inhibited by cyclosporin A (CsA). Functionally, PPIase that catalyzes the cis-trans isomerization of proline imidic peptide bonds in oligopeptides and may therefore assist protein folding. May be involved in pre-mRNA splicing. The protein is Peptidylprolyl isomerase domain and WD repeat-containing protein 1 of Mus musculus (Mouse).